Here is a 234-residue protein sequence, read N- to C-terminus: Probable pectate lyase F (234 aa).

A signal peptide spans 1–17 (MFSRIALLPAFLPVALA). Asparagine 168 and asparagine 194 each carry an N-linked (GlcNAc...) asparagine glycan.

It belongs to the polysaccharide lyase 3 family. It depends on Ca(2+) as a cofactor.

The protein resides in the secreted. It carries out the reaction Eliminative cleavage of (1-&gt;4)-alpha-D-galacturonan to give oligosaccharides with 4-deoxy-alpha-D-galact-4-enuronosyl groups at their non-reducing ends.. Functionally, pectinolytic enzyme consist of four classes of enzymes: pectin lyase, polygalacturonase, pectin methylesterase and rhamnogalacturonase. Among pectinolytic enzymes, pectin lyase is the most important in depolymerization of pectin, since it cleaves internal glycosidic bonds of highly methylated pectins. Favors pectate, the anion, over pectin, the methyl ester. This Aspergillus flavus (strain ATCC 200026 / FGSC A1120 / IAM 13836 / NRRL 3357 / JCM 12722 / SRRC 167) protein is Probable pectate lyase F (plyF).